A 2332-amino-acid polypeptide reads, in one-letter code: Phosphatidylinositol phosphatase PTPRQ (2332 aa).

The first 35 residues, 1–35 (MKKVPIKPEQPEKLRAFNISTHSFSLHWSLPSGHV), serve as a signal peptide directing secretion. Fibronectin type-III domains are found at residues 36-99 (ERYQ…TKPG), 100-195 (PPVF…TAES), 199-294 (KVVN…SSST), 350-438 (PPQN…PPDV), 441-539 (AVFD…SHPD), 514-606 (GLYE…SVRT), 610-705 (VPSS…TSED), 710-799 (SPQD…TSET), 804-894 (APEN…TEED), 899-988 (PPQD…TPEG), 993-1093 (PPKD…TDQD), 1098-1190 (FVGN…TEED), 1192-1282 (PETS…TDES), 1287-1380 (PPQN…TQES), 1384-1470 (VVQN…LPET), 1474-1578 (VPTN…TLPG), 1583-1681 (PPEN…TLES), and 1686-1787 (PPNN…IKAP). Residues 36-1947 (ERYQVDLVPD…GEGLSERTVE (1912 aa)) lie on the Extracellular side of the membrane. A glycan (N-linked (GlcNAc...) asparagine) is linked at Asn94. Residues Asn202 and Asn394 are each glycosylated (N-linked (GlcNAc...) asparagine). N-linked (GlcNAc...) asparagine glycans are attached at residues Asn944, Asn1038, Asn1080, and Asn1101. Asn1290 and Asn1295 each carry an N-linked (GlcNAc...) asparagine glycan. A glycan (N-linked (GlcNAc...) asparagine) is linked at Asn1844. The chain crosses the membrane as a helical span at residues 1948–1968 (IILSVTLCILSIILLGTAIFA). Residues 1969 to 2332 (FARIRQKQKE…VELEWEETTM (364 aa)) lie on the Cytoplasmic side of the membrane. One can recognise a Tyrosine-protein phosphatase domain in the interval 2036–2292 (FQEEFSELPK…IFLHQCILDL (257 aa)). Residue Cys2233 is the Phosphocysteine intermediate of the active site.

It belongs to the protein-tyrosine phosphatase family. Receptor class 2A subfamily. In terms of assembly, interacts with TPRN. TPRN, CLIC5 and PTPQR form concentric rings at the base of stereocilia and may form a complex. In developing kidney, it localizes to the basal membrane of podocytes, beginning when podocyte progenitors can first be identified in the embryonic kidney (at protein level). Expressed in lung and kidney.

It is found in the cell projection. The protein resides in the stereocilium. Its subcellular location is the apical cell membrane. It localises to the basal cell membrane. It carries out the reaction a 1,2-diacyl-sn-glycero-3-phospho-(1D-myo-inositol-3,4,5-trisphosphate) + H2O = a 1,2-diacyl-sn-glycero-3-phospho-(1D-myo-inositol-4,5-bisphosphate) + phosphate. The enzyme catalyses a 1,2-diacyl-sn-glycero-3-phospho-(1D-myo-inositol-3,4,5-trisphosphate) + H2O = a 1,2-diacyl-sn-glycero-3-phospho-(1D-myo-inositol-3,4-bisphosphate) + phosphate. It catalyses the reaction a 1,2-diacyl-sn-glycero-3-phospho-(1D-myo-inositol-3,5-bisphosphate) + H2O = a 1,2-diacyl-sn-glycero-3-phospho-(1D-myo-inositol-5-phosphate) + phosphate. The catalysed reaction is a 1,2-diacyl-sn-glycero-3-phospho-(1D-myo-inositol-3,5-bisphosphate) + H2O = a 1,2-diacyl-sn-glycero-3-phospho-(1D-myo-inositol-3-phosphate) + phosphate. In terms of biological role, dephosphorylates phosphatidylinositol phosphates, such as phosphatidylinositol 3,4,5-trisphosphate (PIP3) and phosphatidylinositol 3,5-diphosphates, with preference for PIP3. Phosphate can be hydrolyzed from the D3 and D5 positions in the inositol ring. Has low tyrosine-protein phosphatase activity in vitro; however, the relevance of such activity in vivo is unclear. Plays an important role in adipogenesis of mesenchymal stem cells (MSCs). Regulates the phosphorylation state of AKT1 by regulating the levels of PIP3 in MSCs and preadipocyte cells. Required for hair bundle maturation, a process that enables hair cells to detect and transmit sound and balance signals effectively, therefore affecting auditory function. May act by regulating the level of phosphatidylinositol 4,5-bisphosphate (PIP2) level in the basal region of hair bundles. The chain is Phosphatidylinositol phosphatase PTPRQ (PTPRQ) from Homo sapiens (Human).